A 749-amino-acid polypeptide reads, in one-letter code: Signal transducer and activator of transcription 4 (749 aa).

The region spanning 570 to 665 (WIDGYIMGFV…ENPLKYLYPD (96 aa)) is the SH2 domain. At Lys668 the chain carries N6-acetyllysine. Residue Tyr694 is modified to Phosphotyrosine; by JAK. Ser722 carries the post-translational modification Phosphoserine.

Belongs to the transcription factor STAT family. Forms a homodimer or a heterodimer with a related family member. Interacts with ARL2BP. Interacts with STAT1. Interacts with JUN; this complex efficiently interacts with the AP-1-related sequence of the IFN-gamma promoter. In terms of processing, acetylation at Lys-668 is required for JAK2-mediated phosphorylation and activation of STAT4. Tyrosine phosphorylated upon IL12 and IFN-alpha activation, but not by IFN-gamma in T-lymphocytes and NK cells. Serine phosphorylation is required for maximal transcriptional activity but not for DNA binding. Phosphorylation by MAP2K6 at Ser-722 is required for full transcriptional activity induced by IL12. However this serine phosphorylation is not required for cell proliferation although critical for IFN-gamma production. In terms of tissue distribution, expression is restricted to testis, thymus, and spleen.

The protein localises to the cytoplasm. It is found in the nucleus. Transcriptional regulator mainly expressed in hematopoietic cells that plays a critical role in cellular growth, differentiation and immune response. Plays a key role in the differentiation of T-helper 1 cells and the production of interferon-gamma. Also participates in multiple neutrophil functions including chemotaxis and production of the neutrophil extracellular traps. After IL12 binding to its receptor IL12RB2, STAT4 interacts with the intracellular domain of IL12RB2 and becomes tyrosine phosphorylated. Phosphorylated STAT4 then homodimerizes and migrates to the nucleus where it can recognize STAT target sequences present in IL12 responsive genes. Although IL12 appears to be the predominant activating signal, STAT4 can also be phosphorylated and activated in response to IFN-gamma stimulation via JAK1 and TYK2 and in response to different interleukins including IL23, IL2 and IL35. Transcription activation of IFN-gamma gene is mediated by interaction with JUN that forms a complex that efficiently interacts with the AP-1-related sequence of the IFN-gamma promoter. In response to IFN-alpha/beta signaling, acts as a transcriptional repressor and suppresses IL5 and IL13 mRNA expression during response to T-cell receptor (TCR) activation. This Mus musculus (Mouse) protein is Signal transducer and activator of transcription 4 (Stat4).